The following is a 1700-amino-acid chain: Probable serine/threonine-protein kinase ifkC (1700 aa).

Residues 1 to 25 are disordered; it reads MPPKPKQKAKQPSQQPPPPPPPAAA. Over residues 14 to 23 the composition is skewed to pro residues; sequence QQPPPPPPPA. The RWD domain maps to 74 to 197; it reads MELEALQAIF…EIAKDFLNEN (124 aa). Residues 454-463 are compositionally biased toward polar residues; sequence GLKKSPSTFE. Residues 454–488 are disordered; sequence GLKKSPSTFEYSGEGGGGGVGGGSSQKTINPHQQS. A compositionally biased stretch (gly residues) spans 466–477; that stretch reads GEGGGGGVGGGS. Positions 479–488 are enriched in polar residues; sequence QKTINPHQQS. The 534-residue stretch at 494–1027 folds into the Protein kinase domain; the sequence is FEEIQLLGRG…AQQLLQSELM (534 aa). ATP is bound by residues 500–508 and lysine 523; that span reads LGRGGFGQV. Disordered stretches follow at residues 568–639 and 689–760; these read LTND…ENND and GNNT…SSSK. Residues 572–639 show a composition bias toward acidic residues; the sequence is NSDDDDDDDD…SEFESEENND (68 aa). The span at 697-735 shows a compositional bias: low complexity; the sequence is SSNQHLQQQQQQNQSQQQKKQPQQNQSQQQKKLKNSNSK. The span at 736–752 shows a compositional bias: basic residues; that stretch reads SKSKSKSKSKSKSKSNS. Aspartate 822 serves as the catalytic Proton acceptor. Composition is skewed to low complexity over residues 850–875, 1135–1158, 1230–1240, and 1509–1531; these read TSTL…SSNS, NNSS…NTNS, SSNGNSNNNNS, and NNSN…SYNN. Disordered regions lie at residues 850–901, 1134–1160, 1216–1253, and 1507–1531; these read TSTL…EVEG, FNNS…NSVV, KHHH…SNTT, and NLNN…SYNN.

Belongs to the protein kinase superfamily. Ser/Thr protein kinase family. GCN2 subfamily.

The catalysed reaction is L-seryl-[protein] + ATP = O-phospho-L-seryl-[protein] + ADP + H(+). The enzyme catalyses L-threonyl-[protein] + ATP = O-phospho-L-threonyl-[protein] + ADP + H(+). The polypeptide is Probable serine/threonine-protein kinase ifkC (ifkC) (Dictyostelium discoideum (Social amoeba)).